The chain runs to 170 residues: Adenine phosphoribosyltransferase (170 aa).

It belongs to the purine/pyrimidine phosphoribosyltransferase family. As to quaternary structure, homodimer.

It localises to the cytoplasm. It carries out the reaction AMP + diphosphate = 5-phospho-alpha-D-ribose 1-diphosphate + adenine. It participates in purine metabolism; AMP biosynthesis via salvage pathway; AMP from adenine: step 1/1. In terms of biological role, catalyzes a salvage reaction resulting in the formation of AMP, that is energically less costly than de novo synthesis. This is Adenine phosphoribosyltransferase from Symbiobacterium thermophilum (strain DSM 24528 / JCM 14929 / IAM 14863 / T).